A 340-amino-acid polypeptide reads, in one-letter code: Alpha-1,4-N-acetylglucosaminyltransferase (340 aa).

Topologically, residues 1–4 are cytoplasmic; it reads MRKE. A helical; Signal-anchor for type II membrane protein membrane pass occupies residues 5 to 25; sequence LQLSLSVTLLLVCGFLYQFTL. Over 26-340 the chain is Lumenal; sequence KSSCLFCLPS…VTGELGPGNK (315 aa). N-linked (GlcNAc...) asparagine glycans are attached at residues Asn99 and Asn138. The DXD motif motif lies at 167–169; sequence DTD. N-linked (GlcNAc...) asparagine glycosylation is found at Asn251 and Asn282.

This sequence belongs to the glycosyltransferase 32 family. In terms of tissue distribution, detected in stomach and pancreas.

The protein localises to the golgi apparatus membrane. The protein operates within protein modification; protein glycosylation. Catalyzes the transfer of N-acetylglucosamine (GlcNAc) to core 2 branched O-glycans. Necessary for the synthesis of type III mucin which is specifically produced in the stomach, duodenum, and pancreatic duct. May protect against inflammation-associated gastric adenocarcinomas. This is Alpha-1,4-N-acetylglucosaminyltransferase (A4GNT) from Homo sapiens (Human).